Here is a 1002-residue protein sequence, read N- to C-terminus: Leucine-rich repeat receptor-like serine/threonine-protein kinase BAM2 (1002 aa).

The N-terminal stretch at 1-22 (MKLLLLLLLLLLLHISHSFTVA) is a signal peptide. At 23–636 (KPITELHALL…SHVKPLSATT (614 aa)) the chain is on the extracellular side. 7 N-linked (GlcNAc...) asparagine glycosylation sites follow: Asn51, Asn80, Asn97, Asn123, Asn130, Asn153, and Asn164. 22 LRR repeats span residues 68–92 (LRHV…VAHL), 93–116 (PLLQ…ISNL), 118–140 (ELRH…LSSG), 141–165 (LVNL…LTNL), 167–188 (QLRH…TYGT), 189–213 (WPVL…IGNL), 215–238 (TLRE…IGNL), 239–262 (SELV…IGKL), 263–285 (QKLD…ELGL), 286–309 (ISSL…SFSQ), 311–334 (KNLT…IGEM), 335–358 (PELE…LGEN), 359–382 (GRLV…MCSG), 384–406 (RLMT…LGKC), 407–430 (ESLT…LFGL), 431–456 (PKLS…GVSG), 458–479 (LGQI…IGNL), 480–503 (SGVQ…IGRL), 505–527 (QLSK…ISRC), 528–551 (KLLT…LTGM), 552–575 (KILN…IASM), and 577–600 (SLTS…QFSY). Asn212 and Asn237 each carry an N-linked (GlcNAc...) asparagine glycan. Residues Asn312 and Asn346 are each glycosylated (N-linked (GlcNAc...) asparagine). Residue Asn420 is glycosylated (N-linked (GlcNAc...) asparagine). Asn478 carries an N-linked (GlcNAc...) asparagine glycan. Asn558, Asn587, and Asn602 each carry an N-linked (GlcNAc...) asparagine glycan. The helical transmembrane segment at 637–657 (KLLLVLGLLFCSMVFAIVAII) threads the bilayer. Topologically, residues 658-1002 (KARSLRNASE…SGSPPDLLSN (345 aa)) are cytoplasmic. Thr682 carries the post-translational modification Phosphothreonine. The Protein kinase domain maps to 690–967 (LKEDNIIGKG…VQILTEIPKI (278 aa)). ATP contacts are provided by residues 696 to 704 (IGKGGAGIV) and Lys718. 2 positions are modified to phosphotyrosine: Tyr765 and Tyr803. Asp816 serves as the catalytic Proton acceptor. Ser851 is subject to Phosphoserine. Phosphotyrosine is present on residues Tyr859 and Tyr866. Residue Thr867 is modified to Phosphothreonine. The tract at residues 969–1002 (LSKQQAAESDVTEKAPAINESSPDSGSPPDLLSN) is disordered. Over residues 989-1002 (SSPDSGSPPDLLSN) the composition is skewed to low complexity.

Belongs to the protein kinase superfamily. Ser/Thr protein kinase family. As to quaternary structure, interacts with BAM1 and CLV1. Binds to the CLV3, CLE11, CLE18, CLE19, CLE22, CLE25, CLE26, CLE40, CLE41 and CLE42 mature peptides, probably via its extracellular leucine-rich repeat region. In terms of tissue distribution, expressed in seedlings, roots, rosette leaves, stems, inflorescences, flowers and siliques.

It localises to the cell membrane. The catalysed reaction is L-seryl-[protein] + ATP = O-phospho-L-seryl-[protein] + ADP + H(+). It carries out the reaction L-threonyl-[protein] + ATP = O-phospho-L-threonyl-[protein] + ADP + H(+). Functionally, necessary for male gametophyte development, as well as ovule specification and function. Involved in cell-cell communication process required during early anther development, and regulating cell division and differentiation to organize cell layers. Required for the development of high-ordered vascular strands within the leaf and a correlated control of leaf shape, size and symmetry. May regulate the CLV1-dependent CLV3-mediated signaling in meristems maintenance. The sequence is that of Leucine-rich repeat receptor-like serine/threonine-protein kinase BAM2 (BAM2) from Arabidopsis thaliana (Mouse-ear cress).